A 192-amino-acid polypeptide reads, in one-letter code: Adapter protein MecA (192 aa).

The protein belongs to the MecA family. As to quaternary structure, homodimer.

In terms of biological role, enables the recognition and targeting of unfolded and aggregated proteins to the ClpC protease or to other proteins involved in proteolysis. Acts negatively in the development of competence by binding ComK and recruiting it to the ClpCP protease. When overexpressed, inhibits sporulation. Also involved in Spx degradation by ClpC. The protein is Adapter protein MecA of Oceanobacillus iheyensis (strain DSM 14371 / CIP 107618 / JCM 11309 / KCTC 3954 / HTE831).